We begin with the raw amino-acid sequence, 431 residues long: C2H2 type master regulator of conidiophore development brlA (431 aa).

3 disordered regions span residues 29 to 51, 211 to 275, and 287 to 306; these read MTSSFSPLESPTPTPTSLYSHGS, TPQQ…SEEY, and IRTHRQPSRKPSKKQLVRSN. The segment covering 30-48 has biased composition (low complexity); the sequence is TSSFSPLESPTPTPTSLYS. Positions 225 to 265 are enriched in polar residues; it reads PSSNYSDFPASLQTFKPHTPSTPVRSLSLGTPRSDTPQSRM. Over residues 287 to 302 the composition is skewed to basic residues; that stretch reads IRTHRQPSRKPSKKQL. C2H2-type zinc fingers lie at residues 321–345 and 351–376; these read FKCKEPGCKGRFKRQEHLKRHMKSH and HVCWVPGCHRAFSRSDNLNAHYTKTH. Positions 390 to 412 are disordered; that stretch reads DETSPDYDPEFRGQLTPDGRPIY.

The protein resides in the nucleus. Functionally, brlA, abaA and wetA are pivotal regulators of conidiophore development and conidium maturation. They act individually and together to regulate their own expression and that of numerous other sporulation-specific genes. Binds promoters of target genes at brlA response elements (BREs) containing the conserved sequence 5'-(C/A)(A/G)AGGG(G/A)-3'. Regulates the expression levels of seven secondary metabolism gene clusters including a down-regulated cluster putatively involved in the biosynthesis of the mycotoxins roquefortine C and meleagrin. Negatively regulates the expression of cellulase genes. The protein is C2H2 type master regulator of conidiophore development brlA of Penicillium oxalicum (strain 114-2 / CGMCC 5302) (Penicillium decumbens).